The sequence spans 457 residues: Siroheme synthase (457 aa).

The tract at residues 1–204 (MDHLPIFCQL…QDQQAVEETT (204 aa)) is precorrin-2 dehydrogenase /sirohydrochlorin ferrochelatase. Residues 22-23 (DV) and 43-44 (LA) each bind NAD(+). A Phosphoserine modification is found at Ser128. A uroporphyrinogen-III C-methyltransferase region spans residues 216 to 457 (GEVVLVGAGP…REKLNWFSNH (242 aa)). Pro225 serves as a coordination point for S-adenosyl-L-methionine. Catalysis depends on Asp248, which acts as the Proton acceptor. Lys270 serves as the catalytic Proton donor. S-adenosyl-L-methionine-binding positions include 301 to 303 (GGD), Ile306, 331 to 332 (TA), Met382, and Gly411.

It in the N-terminal section; belongs to the precorrin-2 dehydrogenase / sirohydrochlorin ferrochelatase family. In the C-terminal section; belongs to the precorrin methyltransferase family.

It catalyses the reaction uroporphyrinogen III + 2 S-adenosyl-L-methionine = precorrin-2 + 2 S-adenosyl-L-homocysteine + H(+). The catalysed reaction is precorrin-2 + NAD(+) = sirohydrochlorin + NADH + 2 H(+). The enzyme catalyses siroheme + 2 H(+) = sirohydrochlorin + Fe(2+). Its pathway is cofactor biosynthesis; adenosylcobalamin biosynthesis; precorrin-2 from uroporphyrinogen III: step 1/1. It functions in the pathway cofactor biosynthesis; adenosylcobalamin biosynthesis; sirohydrochlorin from precorrin-2: step 1/1. The protein operates within porphyrin-containing compound metabolism; siroheme biosynthesis; precorrin-2 from uroporphyrinogen III: step 1/1. It participates in porphyrin-containing compound metabolism; siroheme biosynthesis; siroheme from sirohydrochlorin: step 1/1. Its pathway is porphyrin-containing compound metabolism; siroheme biosynthesis; sirohydrochlorin from precorrin-2: step 1/1. Multifunctional enzyme that catalyzes the SAM-dependent methylations of uroporphyrinogen III at position C-2 and C-7 to form precorrin-2 via precorrin-1. Then it catalyzes the NAD-dependent ring dehydrogenation of precorrin-2 to yield sirohydrochlorin. Finally, it catalyzes the ferrochelation of sirohydrochlorin to yield siroheme. The chain is Siroheme synthase from Enterobacter sp. (strain 638).